The sequence spans 113 residues: uncharacterized protein (113 aa).

A signal peptide spans 1-29 (MLVVYMCIWVLYLLLFLFLFLFIASPASL). The next 2 membrane-spanning stretches (helical) occupy residues 34 to 54 (THIL…CAFF) and 56 to 76 (QVLC…FYFF).

It is found in the membrane. This is an uncharacterized protein from Saccharomyces cerevisiae (strain ATCC 204508 / S288c) (Baker's yeast).